Consider the following 524-residue polypeptide: Protein-export membrane protein SecD (524 aa).

Helical transmembrane passes span V10 to G30, K366 to I386, G389 to L409, D420 to A442, F465 to L485, and L487 to V507.

This sequence belongs to the SecD/SecF family. SecD subfamily. In terms of assembly, part of the protein translocation apparatus. Forms a homodimer and complexes with SecF.

The protein localises to the cell membrane. Its function is as follows. Involved in protein export. This is Protein-export membrane protein SecD from Haloferax volcanii (strain ATCC 29605 / DSM 3757 / JCM 8879 / NBRC 14742 / NCIMB 2012 / VKM B-1768 / DS2) (Halobacterium volcanii).